A 356-amino-acid chain; its full sequence is Tyrosine recombinase XerS (356 aa).

The region spanning 16–121 is the Core-binding (CB) domain; it reads LMPWFVLEYY…ALSCLYKYLT (106 aa). A Tyr recombinase domain is found at 169–354; that stretch reads KFLDYVENEY…VNDEQKNALD (186 aa). Residues Arg210, Lys234, His306, Arg309, and His332 contribute to the active site. Catalysis depends on Tyr341, which acts as the O-(3'-phospho-DNA)-tyrosine intermediate.

This sequence belongs to the 'phage' integrase family. XerS subfamily.

It localises to the cytoplasm. FtsK is required for recombination. Functionally, site-specific tyrosine recombinase, which acts by catalyzing the cutting and rejoining of the recombining DNA molecules. Essential to convert dimers of the bacterial chromosome into monomers to permit their segregation at cell division. The protein is Tyrosine recombinase XerS of Streptococcus thermophilus (strain ATCC BAA-250 / LMG 18311).